We begin with the raw amino-acid sequence, 209 residues long: MKDYKNELKVKINLGEHLRLSIPGLVKKIMYKTHYLEIQVEKEKMLTVLKYLKEASKYQCNMLLDIVCVDCLNIEEIKIGRFKLIYVLNSIYNNTRVHLSTYVENNGIIETTSGLFESSVWLEREIWDMFGIYFEKHPDLRRILTDYGFVGYPLKKDFPITGYLEVYYDVNDKKIIYKPIELMQEYRNYNFGAVWGDYERKVYLENIIK.

The protein belongs to the complex I 30 kDa subunit family. In terms of assembly, complex I is composed of about 45 different subunits.

It localises to the mitochondrion inner membrane. It carries out the reaction a ubiquinone + NADH + 5 H(+)(in) = a ubiquinol + NAD(+) + 4 H(+)(out). In terms of biological role, core subunit of the mitochondrial membrane respiratory chain NADH dehydrogenase (Complex I) that is believed to belong to the minimal assembly required for catalysis. Complex I functions in the transfer of electrons from NADH to the respiratory chain. The immediate electron acceptor for the enzyme is believed to be ubiquinone. The sequence is that of NADH-ubiquinone oxidoreductase subunit 9 (nad9) from Dictyostelium discoideum (Social amoeba).